A 150-amino-acid chain; its full sequence is Large ribosomal subunit protein eL19 (150 aa).

A disordered region spans residues 56 to 90 (RGISSGRLKERKHKRRSKGEGRKHGSRKGKSGART).

Belongs to the eukaryotic ribosomal protein eL19 family. As to quaternary structure, part of the 50S ribosomal subunit.

Binds to the 23S rRNA. The sequence is that of Large ribosomal subunit protein eL19 from Sulfolobus acidocaldarius (strain ATCC 33909 / DSM 639 / JCM 8929 / NBRC 15157 / NCIMB 11770).